The primary structure comprises 231 residues: Cytochrome c oxidase subunit 2 (231 aa).

Residues 1 to 14 are Mitochondrial intermembrane-facing; sequence MAHPAQLGLQNATS. Residues 15–45 traverse the membrane as a helical segment; that stretch reads PIMEELIAFHDHALMIIFLISSLVLYVISLM. Residues 46–59 lie on the Mitochondrial matrix side of the membrane; sequence LTTKLTHTSTMNAQ. Residues 60-87 form a helical membrane-spanning segment; that stretch reads EIEMIWTILPAIILIMIALPSLRILYMT. At 88-231 the chain is on the mitochondrial intermembrane side; sequence DEFNKPYLTL…WASYLYIVSL (144 aa). Cu cation contacts are provided by histidine 161, cysteine 196, glutamate 198, cysteine 200, histidine 204, and methionine 207. Glutamate 198 serves as a coordination point for Mg(2+).

This sequence belongs to the cytochrome c oxidase subunit 2 family. In terms of assembly, component of the cytochrome c oxidase (complex IV, CIV), a multisubunit enzyme composed of 14 subunits. The complex is composed of a catalytic core of 3 subunits MT-CO1, MT-CO2 and MT-CO3, encoded in the mitochondrial DNA, and 11 supernumerary subunits COX4I, COX5A, COX5B, COX6A, COX6B, COX6C, COX7A, COX7B, COX7C, COX8 and NDUFA4, which are encoded in the nuclear genome. The complex exists as a monomer or a dimer and forms supercomplexes (SCs) in the inner mitochondrial membrane with NADH-ubiquinone oxidoreductase (complex I, CI) and ubiquinol-cytochrome c oxidoreductase (cytochrome b-c1 complex, complex III, CIII), resulting in different assemblies (supercomplex SCI(1)III(2)IV(1) and megacomplex MCI(2)III(2)IV(2)). Found in a complex with TMEM177, COA6, COX18, COX20, SCO1 and SCO2. Interacts with TMEM177 in a COX20-dependent manner. Interacts with COX20. Interacts with COX16. Cu cation serves as cofactor.

It is found in the mitochondrion inner membrane. The enzyme catalyses 4 Fe(II)-[cytochrome c] + O2 + 8 H(+)(in) = 4 Fe(III)-[cytochrome c] + 2 H2O + 4 H(+)(out). Functionally, component of the cytochrome c oxidase, the last enzyme in the mitochondrial electron transport chain which drives oxidative phosphorylation. The respiratory chain contains 3 multisubunit complexes succinate dehydrogenase (complex II, CII), ubiquinol-cytochrome c oxidoreductase (cytochrome b-c1 complex, complex III, CIII) and cytochrome c oxidase (complex IV, CIV), that cooperate to transfer electrons derived from NADH and succinate to molecular oxygen, creating an electrochemical gradient over the inner membrane that drives transmembrane transport and the ATP synthase. Cytochrome c oxidase is the component of the respiratory chain that catalyzes the reduction of oxygen to water. Electrons originating from reduced cytochrome c in the intermembrane space (IMS) are transferred via the dinuclear copper A center (CU(A)) of subunit 2 and heme A of subunit 1 to the active site in subunit 1, a binuclear center (BNC) formed by heme A3 and copper B (CU(B)). The BNC reduces molecular oxygen to 2 water molecules using 4 electrons from cytochrome c in the IMS and 4 protons from the mitochondrial matrix. In Alouatta palliata (Mantled howler monkey), this protein is Cytochrome c oxidase subunit 2 (MT-CO2).